The chain runs to 458 residues: UDP-N-acetylmuramate--L-alanine ligase (458 aa).

Residue 118–124 (GTHGKTT) coordinates ATP.

Belongs to the MurCDEF family.

The protein localises to the cytoplasm. It carries out the reaction UDP-N-acetyl-alpha-D-muramate + L-alanine + ATP = UDP-N-acetyl-alpha-D-muramoyl-L-alanine + ADP + phosphate + H(+). It functions in the pathway cell wall biogenesis; peptidoglycan biosynthesis. Its function is as follows. Cell wall formation. The protein is UDP-N-acetylmuramate--L-alanine ligase of Clostridium novyi (strain NT).